The primary structure comprises 508 residues: Ribonuclease Y (508 aa).

A helical membrane pass occupies residues 1-21 (MMLWYIVAGAGGLLIGYLIAN). The KH domain maps to 198-283 (TVSTVSLPSD…EMYEKAKQEV (86 aa)). Positions 324–417 (VLNHSIEVAL…VAAADALSAA (94 aa)) constitute an HD domain.

Belongs to the RNase Y family.

It is found in the cell membrane. In terms of biological role, endoribonuclease that initiates mRNA decay. In Thermotoga maritima (strain ATCC 43589 / DSM 3109 / JCM 10099 / NBRC 100826 / MSB8), this protein is Ribonuclease Y.